Reading from the N-terminus, the 396-residue chain is Elongation factor Tu 2 (396 aa).

A tr-type G domain is found at 10-206; sequence KPHVNVGTIG…ALDTYIPTPE (197 aa). The G1 stretch occupies residues 19-26; that stretch reads GHVDHGKT. 19 to 26 contacts GTP; the sequence is GHVDHGKT. A Mg(2+)-binding site is contributed by T26. Residues 60-64 form a G2 region; that stretch reads GITIN. Residues 81–84 form a G3 region; sequence DCPG. GTP-binding positions include 81–85 and 136–139; these read DCPGH and NKCD. The G4 stretch occupies residues 136–139; sequence NKCD. The tract at residues 174 to 176 is G5; it reads SAK.

It belongs to the TRAFAC class translation factor GTPase superfamily. Classic translation factor GTPase family. EF-Tu/EF-1A subfamily. Monomer.

It localises to the cytoplasm. The catalysed reaction is GTP + H2O = GDP + phosphate + H(+). In terms of biological role, GTP hydrolase that promotes the GTP-dependent binding of aminoacyl-tRNA to the A-site of ribosomes during protein biosynthesis. This Acidovorax sp. (strain JS42) protein is Elongation factor Tu 2.